Reading from the N-terminus, the 950-residue chain is MORC family CW-type zinc finger protein 1 (950 aa).

A coiled-coil region spans residues Lys-281–Gln-342. The CW-type zinc finger occupies Ser-465–Ser-530. 4 residues coordinate Zn(2+): Cys-485, Cys-488, Cys-511, and Cys-522. Disordered regions lie at residues Pro-532–Gln-551 and Lys-679–Arg-700. Over residues Pro-541–Leu-550 the composition is skewed to basic and acidic residues. Residues Leu-885–Gly-916 are a coiled coil.

As to expression, expressed at very low level in male germ cells.

Its subcellular location is the nucleus. Functionally, required for spermatogenesis. Essential for de novo DNA methylation and silencing of transposable elements in the male embryonic germ cells. Not required for piRNA biosynthesis. The protein is MORC family CW-type zinc finger protein 1 of Mus musculus (Mouse).